The following is a 43-amino-acid chain: Protein PsbN (43 aa).

Residues 7 to 27 (LIIFIASLLLGLTGYSIYTAF) form a helical membrane-spanning segment.

It belongs to the PsbN family.

The protein localises to the plastid. Its subcellular location is the chloroplast thylakoid membrane. Functionally, may play a role in photosystem I and II biogenesis. This Guillardia theta (Cryptophyte) protein is Protein PsbN.